Consider the following 504-residue polypeptide: Probable cytosol aminopeptidase (504 aa).

Lys268 and Asp273 together coordinate Mn(2+). The active site involves Lys280. 3 residues coordinate Mn(2+): Asp291, Asp350, and Glu352. Arg354 is an active-site residue.

It belongs to the peptidase M17 family. Mn(2+) serves as cofactor.

It is found in the cytoplasm. The enzyme catalyses Release of an N-terminal amino acid, Xaa-|-Yaa-, in which Xaa is preferably Leu, but may be other amino acids including Pro although not Arg or Lys, and Yaa may be Pro. Amino acid amides and methyl esters are also readily hydrolyzed, but rates on arylamides are exceedingly low.. The catalysed reaction is Release of an N-terminal amino acid, preferentially leucine, but not glutamic or aspartic acids.. Presumably involved in the processing and regular turnover of intracellular proteins. Catalyzes the removal of unsubstituted N-terminal amino acids from various peptides. The chain is Probable cytosol aminopeptidase from Psychromonas ingrahamii (strain DSM 17664 / CCUG 51855 / 37).